The following is a 23-amino-acid chain: Phallacidin proprotein (23 aa).

A propeptide is located at residue proline 1. The segment at residues 2-8 is a cross-link (cyclopeptide (Ala-Pro)); it reads AWLVDCP. Positions 3 to 7 form a cross-link, 2'-cysteinyl-6'-hydroxytryptophan sulfoxide (Trp-Cys); it reads WLVDC. A propeptide spanning residues 9–23 is cleaved from the precursor; the sequence is CVGDDVNFILTRGQK.

Belongs to the MSDIN fungal toxin family. Processed by the macrocyclase-peptidase enzyme POPB to yield a toxic cyclic heptapeptide. POPB first removes 10 residues from the N-terminus. Conformational trapping of the remaining peptide forces the enzyme to release this intermediate rather than proceed to macrocyclization. The enzyme rebinds the remaining peptide in a different conformation and catalyzes macrocyclization of the N-terminal 7 residues.

Its function is as follows. Major toxin that belongs to the bicyclic heptapeptides called phallotoxins. Although structurally related to amatoxins, phallotoxins have a different mode of action, which is the stabilization of F-actin. Phallotoxins are poisonous when administered parenterally, but not orally because of poor absorption. The chain is Phallacidin proprotein from Amanita fuligineoides.